We begin with the raw amino-acid sequence, 270 residues long: Phospholipase A and acyltransferase 5 (270 aa).

Disordered regions lie at residues 1–54 (MGLS…SASS) and 70–122 (RRLE…NPRP). 2 stretches are compositionally biased toward polar residues: residues 24–54 (TQISKTSSTESSDTQSATGQSTVPHSDSASS) and 100–116 (IPTSNSEIESTQKNQAV). In terms of domain architecture, LRAT spans 127–240 (LIEIFRIGYE…LRYGVPRSQQ (114 aa)). Active-site residues include His137 and His149. The active-site Acyl-thioester intermediate is the Cys224.

Belongs to the H-rev107 family. In terms of tissue distribution, isoform 4 shows highest expression level in testis.

It localises to the cytoplasm. It is found in the cytosol. The catalysed reaction is a 1,2-diacyl-sn-glycero-3-phosphocholine + H2O = a 1-acyl-sn-glycero-3-phosphocholine + a fatty acid + H(+). The enzyme catalyses a 1,2-diacyl-sn-glycero-3-phosphocholine + H2O = a 2-acyl-sn-glycero-3-phosphocholine + a fatty acid + H(+). It carries out the reaction 1-hexadecanoyl-2-(5Z,8Z,11Z,14Z-eicosatetraenoyl)-sn-glycero-3-phosphocholine + 1,2-di-(9Z-octadecenoyl)-sn-glycero-3-phosphoethanolamine = N-(5Z,8Z,11Z,14Z-eicosatetraenoyl)-1,2-di-(9Z-octadecenoyl)-sn-glycero-3-phosphoethanolamine + 1-hexadecanoyl-sn-glycero-3-phosphocholine + H(+). It catalyses the reaction 1,2-di-(9Z-octadecenoyl)-sn-glycero-3-phosphoethanolamine + 1,2-dihexadecanoyl-sn-glycero-3-phosphocholine = N-hexadecanoyl-1,2-di-(9Z-octadecenoyl)-sn-glycero-3-phosphoethanolamine + 1-hexadecanoyl-sn-glycero-3-phosphocholine + H(+). The catalysed reaction is 1,2-di-(9Z-octadecenoyl)-sn-glycero-3-phosphoethanolamine + 1,2-dihexadecanoyl-sn-glycero-3-phosphocholine = N-hexadecanoyl-1,2-di-(9Z-octadecenoyl)-sn-glycero-3-phosphoethanolamine + 2-hexadecanoyl-sn-glycero-3-phosphocholine + H(+). The enzyme catalyses a 1,2-diacyl-sn-glycero-3-phosphoethanolamine + a 1,2-diacyl-sn-glycero-3-phosphocholine = an N-acyl-1,2-diacyl-sn-glycero-3-phosphoethanolamine + a 1-acyl-sn-glycero-3-phosphocholine + H(+). It carries out the reaction a 1,2-diacyl-sn-glycero-3-phosphoethanolamine + a 1,2-diacyl-sn-glycero-3-phosphocholine = an N-acyl-1,2-diacyl-sn-glycero-3-phosphoethanolamine + a 2-acyl-sn-glycero-3-phosphocholine + H(+). It catalyses the reaction 1-hexadecanoyl-2-(9Z-octadecenoyl)-sn-glycero-3-phosphocholine + 1,2-di-(9Z-octadecenoyl)-sn-glycero-3-phosphoethanolamine = N,1,2-tri-(9Z-octadecenoyl)-sn-glycero-3-phosphoethanolamine + 1-hexadecanoyl-sn-glycero-3-phosphocholine + H(+). Functionally, exhibits both phospholipase A1/2 and acyltransferase activities. Shows phospholipase A1 (PLA1) and A2 (PLA2) activity, catalyzing the calcium-independent release of fatty acids from the sn-1 or sn-2 position of glycerophospholipids. Shows N-acyltransferase activity, catalyzing the calcium-independent transfer of a fatty acyl group at the sn-1 position of phosphatidylcholine (PC) and other glycerophospholipids to the primary amine of phosphatidylethanolamine (PE), forming N-acylphosphatidylethanolamine (NAPE), which serves as precursor for N-acylethanolamines (NAEs). This Mus musculus (Mouse) protein is Phospholipase A and acyltransferase 5.